The sequence spans 1740 residues: Vitamin B12-dependent ribonucleoside-diphosphate reductase (1740 aa).

Residues 4-96 (EKVMKRDGRI…LYRKKKAEIR (93 aa)) enclose the ATP-cone domain. Substrate contacts are provided by residues threonine 257, 272–273 (AC), and glycine 301. Residues cysteine 273 and cysteine 1308 are joined by a disulfide bond. The DOD-type homing endonuclease 1 domain maps to 443–582 (LAGFIAGDGC…VTHYLNALGI (140 aa)). Asparagine 913 functions as the Proton acceptor in the catalytic mechanism. Residue 913–914 (NP) coordinates substrate. In terms of domain architecture, DOD-type homing endonuclease 2 spans 1063 to 1194 (VLGWFIGDGY…VQDLLLLFGI (132 aa)). The active-site Cysteine radical intermediate is the cysteine 1297. Substrate is bound by residues 1297–1299 (CGE) and 1471–1475 (PTGSV). Glutamate 1299 acts as the Proton acceptor in catalysis.

It belongs to the ribonucleoside diphosphate reductase class-2 family. Adenosylcob(III)alamin serves as cofactor. This protein undergoes a protein self splicing that involves a post-translational excision of the intervening region (intein) followed by peptide ligation.

It catalyses the reaction a 2'-deoxyribonucleoside 5'-diphosphate + [thioredoxin]-disulfide + H2O = a ribonucleoside 5'-diphosphate + [thioredoxin]-dithiol. Its function is as follows. Provides the precursors necessary for DNA synthesis. Catalyzes the biosynthesis of deoxyribonucleotides from the corresponding ribonucleotides. This chain is Vitamin B12-dependent ribonucleoside-diphosphate reductase (rnr), found in Pyrococcus furiosus (strain ATCC 43587 / DSM 3638 / JCM 8422 / Vc1).